The chain runs to 561 residues: Putative transport protein KPN78578_08530 (561 aa).

5 consecutive transmembrane segments (helical) span residues Leu8–Gly28, Leu37–Ile57, Phe66–Phe86, Met94–Phe114, and His158–Ala178. RCK C-terminal domains lie at Leu202–Asn288 and Val292–Phe373. 5 helical membrane-spanning segments follow: residues Leu383–Phe403, Phe406–Leu426, Phe447–Gly467, Ala478–Leu498, and Ala540–Leu560.

Belongs to the AAE transporter (TC 2.A.81) family. YbjL subfamily.

Its subcellular location is the cell membrane. The chain is Putative transport protein KPN78578_08530 from Klebsiella pneumoniae subsp. pneumoniae (strain ATCC 700721 / MGH 78578).